The chain runs to 116 residues: U11-theraphotoxin-Hhn1b (116 aa).

The signal sequence occupies residues 1 to 21 (MNTVRVTFLLVFVLAVSLGQA). Positions 22 to 74 (DKDENRMEMQEKTEQGKSYLDFAENLLLQKLEELEAKLLEEDSEESRNSRQKR) are excised as a propeptide. The span at 60–69 (LEEDSEESRN) shows a compositional bias: basic and acidic residues. The interval 60–83 (LEEDSEESRNSRQKRCIGEGVPCD) is disordered. 3 cysteine pairs are disulfide-bonded: cysteine 75–cysteine 90, cysteine 82–cysteine 95, and cysteine 89–cysteine 110.

It belongs to the neurotoxin 14 (magi-1) family. 01 (HNTX-16) subfamily. In terms of tissue distribution, expressed by the venom gland.

The protein resides in the secreted. Its function is as follows. Probable ion channel inhibitor. In Cyriopagopus hainanus (Chinese bird spider), this protein is U11-theraphotoxin-Hhn1b.